The primary structure comprises 286 residues: 33 kDa chaperonin (286 aa).

Cystine bridges form between cysteine 225–cysteine 227 and cysteine 258–cysteine 261.

This sequence belongs to the HSP33 family. Under oxidizing conditions two disulfide bonds are formed involving the reactive cysteines. Under reducing conditions zinc is bound to the reactive cysteines and the protein is inactive.

It is found in the cytoplasm. Redox regulated molecular chaperone. Protects both thermally unfolding and oxidatively damaged proteins from irreversible aggregation. Plays an important role in the bacterial defense system toward oxidative stress. The protein is 33 kDa chaperonin of Shewanella putrefaciens (strain CN-32 / ATCC BAA-453).